The primary structure comprises 143 residues: Large ribosomal subunit protein uL11 (143 aa).

Belongs to the universal ribosomal protein uL11 family. Part of the ribosomal stalk of the 50S ribosomal subunit. Interacts with L10 and the large rRNA to form the base of the stalk. L10 forms an elongated spine to which L12 dimers bind in a sequential fashion forming a multimeric L10(L12)X complex. In terms of processing, one or more lysine residues are methylated.

Forms part of the ribosomal stalk which helps the ribosome interact with GTP-bound translation factors. The protein is Large ribosomal subunit protein uL11 of Methylibium petroleiphilum (strain ATCC BAA-1232 / LMG 22953 / PM1).